The following is a 271-amino-acid chain: ATP synthase subunit a (271 aa).

The next 5 membrane-spanning stretches (helical) occupy residues 31–51 (WDTI…GLYM), 89–109 (FVAP…WIGV), 124–144 (DINL…IVSL), 186–206 (IFSG…VLWL), and 216–236 (LGVG…YYAF). Residues 247-271 (DEHADGGDSSSRQASPTPLPAGQVR) form a disordered region.

It belongs to the ATPase A chain family. F-type ATPases have 2 components, CF(1) - the catalytic core - and CF(0) - the membrane proton channel. CF(1) has five subunits: alpha(3), beta(3), gamma(1), delta(1), epsilon(1). CF(0) has three main subunits: a(1), b(2) and c(9-12). The alpha and beta chains form an alternating ring which encloses part of the gamma chain. CF(1) is attached to CF(0) by a central stalk formed by the gamma and epsilon chains, while a peripheral stalk is formed by the delta and b chains.

Its subcellular location is the cell membrane. Key component of the proton channel; it plays a direct role in the translocation of protons across the membrane. The protein is ATP synthase subunit a of Acidothermus cellulolyticus (strain ATCC 43068 / DSM 8971 / 11B).